A 1078-amino-acid chain; its full sequence is Rho family-interacting cell polarization regulator 2 (1078 aa).

Phosphoserine is present on residues S46 and S62. Positions M80–G138 are involved in cell filopodia formation. Positions N108–L137 form a coiled coil. Residue S366 is modified to Phosphoserine. A compositionally biased stretch (polar residues) spans S488 to S508. Residues S488–R534 form a disordered region. Positions L509–E525 are enriched in basic and acidic residues. S582 is modified (phosphoserine).

The protein belongs to the RIPOR family. Homooligomer; homooligomerization is regulated by RHOC and leads to the formation of concatemers through the association of N- and C-termini. Interacts (phosphorylated form) with 14-3-3 proteins; these interactions occur during myogenic cell differentiation and also induces T cell proliferation arrest. Interacts (phosphorylated form) with HDAC6; this interaction occurs during early myogenic differentiation, prevents HDAC6 to deacetylate tubulin and also induces T cell proliferation arrest. Interacts with DYSF; this interaction occurs during early myogenic differentiation. Interacts with MYOF. Interacts (via active GTP- or inactive GDP-bound forms) with RHOA; this interaction is direct, blocks the loading of GTP to RHOA and decreases upon chemokine CCL19 stimulation in primary T lymphocytes. Interacts with RHOC. Interacts (via phosphorylated form) with YWHAB; this interaction occurs in a chemokine-dependent manner and does not compete for binding of RIPOR2 with RHOA nor blocks inhibition of RIPOR2-mediated RHOA activity. Interacts with YWHAE. Interacts with YWHAQ. Post-translationally, phosphorylated. Chemokine-induced phosphorylation in neutrophils occurs in a PKC- and AKT-dependent manner, resulting in RIPOR2 interaction with YWHAB and stabilization. Phosphorylated by PKCA, AKT1 and MAPKAPK1A; in vitro. As to expression, expressed in the cochlea. Expressed in inner hair cells and outer hair cells and Hensen's cells (at protein level). Expressed in the brain, cerebellum, spinal cord, retina, heart, spleen liver, kidney, bladder, muscle and lung. Expressed in the cochlea of the inner ear.

Its subcellular location is the cytoplasm. It is found in the cytoskeleton. The protein resides in the cell projection. It localises to the filopodium. The protein localises to the stereocilium. Its subcellular location is the stereocilium membrane. It is found in the apical cell membrane. Acts as an inhibitor of the small GTPase RHOA and plays several roles in the regulation of myoblast and hair cell differentiation, lymphocyte T proliferation and neutrophil polarization. Plays a role in fetal mononuclear myoblast differentiation by promoting filopodia and myotube formation. Maintains naive T lymphocytes in a quiescent state and prevents chemokine-induced T lymphocyte responses, such as cell adhesion, polarization and migration. Involved also in the regulation of neutrophil polarization, chemotaxis and adhesion. Required for normal development of inner and outer hair cell stereocilia within the cochlea of the inner ear. Plays a role for maintaining the structural organization of the basal domain of stereocilia. Involved in mechanosensory hair cell function. Required for normal hearing. This chain is Rho family-interacting cell polarization regulator 2, found in Mus musculus (Mouse).